The sequence spans 100 residues: Co-chaperonin GroES (100 aa).

It belongs to the GroES chaperonin family. Heptamer of 7 subunits arranged in a ring. Interacts with the chaperonin GroEL.

The protein localises to the cytoplasm. In terms of biological role, together with the chaperonin GroEL, plays an essential role in assisting protein folding. The GroEL-GroES system forms a nano-cage that allows encapsulation of the non-native substrate proteins and provides a physical environment optimized to promote and accelerate protein folding. GroES binds to the apical surface of the GroEL ring, thereby capping the opening of the GroEL channel. In Mycolicibacterium vanbaalenii (strain DSM 7251 / JCM 13017 / BCRC 16820 / KCTC 9966 / NRRL B-24157 / PYR-1) (Mycobacterium vanbaalenii), this protein is Co-chaperonin GroES.